A 480-amino-acid chain; its full sequence is Iroquois-class homeodomain protein IRX-1 (480 aa).

A DNA-binding region (homeobox; TALE-type) is located at residues 125-188 (YGDPGRPKNA…ANARRRLKKE (64 aa)). Disordered regions lie at residues 190 to 268 (KVTW…QGSP), 280 to 354 (SPLG…PLQH), and 401 to 480 (PHGP…LPSA). Positions 210 to 228 (TEGDPEKAEDDEEIDLESI) are enriched in acidic residues. Residues 229-239 (DIDKIDEHDGD) show a composition bias toward basic and acidic residues. S241 carries the phosphoserine modification. Low complexity-rich tracts occupy residues 252–262 (PHAPAAPSALA) and 340–351 (HPGAHGPSAGAP). Pro residues predominate over residues 404-417 (PHLPAPPPPQPPVA).

The protein belongs to the TALE/IRO homeobox family.

The protein localises to the nucleus. The sequence is that of Iroquois-class homeodomain protein IRX-1 (IRX1) from Homo sapiens (Human).